We begin with the raw amino-acid sequence, 116 residues long: Large ribosomal subunit protein bL17 (116 aa).

Belongs to the bacterial ribosomal protein bL17 family. Part of the 50S ribosomal subunit. Contacts protein L32.

The sequence is that of Large ribosomal subunit protein bL17 from Thermosynechococcus vestitus (strain NIES-2133 / IAM M-273 / BP-1).